The chain runs to 149 residues: Nucleoside diphosphate kinase 1 (149 aa).

Residues Lys-9, Phe-57, Arg-85, Thr-91, Arg-102, and Asn-112 each contribute to the ATP site. Catalysis depends on His-115, which acts as the Pros-phosphohistidine intermediate.

It belongs to the NDK family. Mg(2+) serves as cofactor. In terms of processing, autophosphorylated.

It carries out the reaction a 2'-deoxyribonucleoside 5'-diphosphate + ATP = a 2'-deoxyribonucleoside 5'-triphosphate + ADP. It catalyses the reaction a ribonucleoside 5'-diphosphate + ATP = a ribonucleoside 5'-triphosphate + ADP. Functionally, major role in the synthesis of nucleoside triphosphates other than ATP. The ATP gamma phosphate is transferred to the NDP beta phosphate via a ping-pong mechanism, using a phosphorylated active-site intermediate. Also exhibits a kinase-like activity towards histone H1. The polypeptide is Nucleoside diphosphate kinase 1 (NDPK1) (Saccharum officinarum (Sugarcane)).